Here is a 172-residue protein sequence, read N- to C-terminus: Odorant-binding protein (172 aa).

The first 15 residues, Met1–Cys15, serve as a signal peptide directing secretion. Intrachain disulfides connect Cys60/Cys64 and Cys79/Cys170.

It belongs to the calycin superfamily. Lipocalin family. As to quaternary structure, homodimer.

Its subcellular location is the secreted. Functionally, this protein is found in nasal epithelium and it binds a wide variety of chemical odorants. This is Odorant-binding protein (Obp1f) from Rattus norvegicus (Rat).